A 178-amino-acid chain; its full sequence is ATP synthase subunit delta (178 aa).

The protein belongs to the ATPase delta chain family. F-type ATPases have 2 components, F(1) - the catalytic core - and F(0) - the membrane proton channel. F(1) has five subunits: alpha(3), beta(3), gamma(1), delta(1), epsilon(1). F(0) has three main subunits: a(1), b(2) and c(10-14). The alpha and beta chains form an alternating ring which encloses part of the gamma chain. F(1) is attached to F(0) by a central stalk formed by the gamma and epsilon chains, while a peripheral stalk is formed by the delta and b chains.

Its subcellular location is the cell inner membrane. Its function is as follows. F(1)F(0) ATP synthase produces ATP from ADP in the presence of a proton or sodium gradient. F-type ATPases consist of two structural domains, F(1) containing the extramembraneous catalytic core and F(0) containing the membrane proton channel, linked together by a central stalk and a peripheral stalk. During catalysis, ATP synthesis in the catalytic domain of F(1) is coupled via a rotary mechanism of the central stalk subunits to proton translocation. In terms of biological role, this protein is part of the stalk that links CF(0) to CF(1). It either transmits conformational changes from CF(0) to CF(1) or is implicated in proton conduction. This Alcanivorax borkumensis (strain ATCC 700651 / DSM 11573 / NCIMB 13689 / SK2) protein is ATP synthase subunit delta.